The following is a 347-amino-acid chain: NADH-ubiquinone oxidoreductase chain 2 (347 aa).

The next 10 helical transmembrane spans lie at 13-33, 59-79, 84-104, 111-131, 149-169, 178-198, 201-221, 240-260, 276-296, and 326-346; these read IILGTSIVITSSHWLTVWIGF, YFLIQATASMLLMLAVTINLL, WAVSNMIDPLALTIMTLALAM, FHFWVPEVTQGVPLLSGLILL, IDPTLILTMSILSVLVGGWGG, IMAYSSISHMGWMTAILIYNP, TILNLLLYIMMTSTTFILLII, IAIIILTTMLSLGGLPPLTGF, IALSLFMAMAALLNLYFYTRL, and LSPLIIISTMILPLTPTMSAL.

This sequence belongs to the complex I subunit 2 family. As to quaternary structure, core subunit of respiratory chain NADH dehydrogenase (Complex I) which is composed of 45 different subunits. Interacts with TMEM242.

It is found in the mitochondrion inner membrane. The enzyme catalyses a ubiquinone + NADH + 5 H(+)(in) = a ubiquinol + NAD(+) + 4 H(+)(out). Functionally, core subunit of the mitochondrial membrane respiratory chain NADH dehydrogenase (Complex I) that is believed to belong to the minimal assembly required for catalysis. Complex I functions in the transfer of electrons from NADH to the respiratory chain. The immediate electron acceptor for the enzyme is believed to be ubiquinone. The chain is NADH-ubiquinone oxidoreductase chain 2 from Chrotopterus auritus (Peters's woolly false vampire bat).